The chain runs to 361 residues: Phospho-N-acetylmuramoyl-pentapeptide-transferase (361 aa).

The next 10 membrane-spanning stretches (helical) occupy residues 26-46 (SILAALTALFLSLWIGPVLIQ), 73-93 (TMGGSLILMTVTLSVLLWGDL), 98-118 (VWLVLVVMLAFGAIGWYDDWI), 139-159 (IFGLAAGLFLYFTADVPAAVT), 168-188 (IALPLTSISFVAITYFWIVGF), 200-220 (GLAIMPTVLVACALGVFAYAS), 237-257 (AGDLIIICAAIAGAGLGFLWF), 264-284 (VFMGDIGALALGAVLGTIAVI), 289-309 (LVLVVMGGVFVIETLSVIIQV), and 339-359 (VIVRFWIISVVLVLVGLATLK).

The protein belongs to the glycosyltransferase 4 family. MraY subfamily. The cofactor is Mg(2+).

The protein localises to the cell inner membrane. The catalysed reaction is UDP-N-acetyl-alpha-D-muramoyl-L-alanyl-gamma-D-glutamyl-meso-2,6-diaminopimeloyl-D-alanyl-D-alanine + di-trans,octa-cis-undecaprenyl phosphate = di-trans,octa-cis-undecaprenyl diphospho-N-acetyl-alpha-D-muramoyl-L-alanyl-D-glutamyl-meso-2,6-diaminopimeloyl-D-alanyl-D-alanine + UMP. It participates in cell wall biogenesis; peptidoglycan biosynthesis. Its function is as follows. Catalyzes the initial step of the lipid cycle reactions in the biosynthesis of the cell wall peptidoglycan: transfers peptidoglycan precursor phospho-MurNAc-pentapeptide from UDP-MurNAc-pentapeptide onto the lipid carrier undecaprenyl phosphate, yielding undecaprenyl-pyrophosphoryl-MurNAc-pentapeptide, known as lipid I. This chain is Phospho-N-acetylmuramoyl-pentapeptide-transferase, found in Xylella fastidiosa (strain 9a5c).